A 507-amino-acid polypeptide reads, in one-letter code: ATP synthase subunit alpha, chloroplastic (507 aa).

170-177 (GDRQTGKT) contributes to the ATP binding site.

This sequence belongs to the ATPase alpha/beta chains family. F-type ATPases have 2 components, CF(1) - the catalytic core - and CF(0) - the membrane proton channel. CF(1) has five subunits: alpha(3), beta(3), gamma(1), delta(1), epsilon(1). CF(0) has four main subunits: a, b, b' and c.

Its subcellular location is the plastid. It is found in the chloroplast thylakoid membrane. It catalyses the reaction ATP + H2O + 4 H(+)(in) = ADP + phosphate + 5 H(+)(out). Its function is as follows. Produces ATP from ADP in the presence of a proton gradient across the membrane. The alpha chain is a regulatory subunit. This chain is ATP synthase subunit alpha, chloroplastic, found in Chloranthus spicatus (Chulantree).